Reading from the N-terminus, the 346-residue chain is MAACATHSSLMLAYAAASTRSQDLTPTPSLFSFASSRPNHLSFPLLLLGGSRDRRCAAIDRASNHKFIVSAVAAEADLDTEEDLEQTATAVLDPPKPKKGKAALVLKRDRTRSKRFLEIQKLRETKKEYDVNTAISLLKQTANTRFVESVEAHFRLNIDPKYNDQQLRATVSLPKGTGQTVIVAVLAQGEKVDEAKSAGADIVGSDDLIEQIKGGFMEFDKLIASPDMMVKVAGLGKILGPRGLMPNPKAGTVTANIPQAIEEFKKGKVEFRADKTGIVHIPFGKVNFTEEDLLINFLAAVKSVETNKPKGAKGVYWKSAHICSSMGPSIKLNIREMIDFKPPTAN.

The N-terminal 70 residues, 1-70, are a transit peptide targeting the chloroplast; it reads MAACATHSSL…RASNHKFIVS (70 aa). Position 129 is a phosphotyrosine (Tyr129). Phosphothreonine is present on Thr177. A Phosphoserine modification is found at Ser197.

It belongs to the universal ribosomal protein uL1 family. As to quaternary structure, part of the 50S ribosomal subunit.

It localises to the plastid. It is found in the chloroplast. Functionally, this protein binds directly to 23S ribosomal RNA. In Arabidopsis thaliana (Mouse-ear cress), this protein is Large ribosomal subunit protein uL1c (RPL1).